Here is a 483-residue protein sequence, read N- to C-terminus: Triplex capsid protein 1 (483 aa).

The RIP homotypic interaction motif (RHIM) signature appears at 24-40; that stretch reads LLGNNRFIQIGNGLHMT.

It belongs to the herpesviridae TRX1 protein family. Interacts with TRX2, MCP and capsid vertex component 2/CVC2. Self-assembles into homo-oligomeric amyloid fibrils. Interacts with host ZBP1; this interaction prevents host necroptosis and extrinsic apoptosis. Interacts with host RIPK3.

The protein resides in the virion. It localises to the host nucleus. In terms of biological role, structural component of the T=16 icosahedral capsid. The capsid is composed of pentamers and hexamers of major capsid protein/MCP, which are linked together by heterotrimers called triplexes. These triplexes are formed by a single molecule of triplex protein 1/TRX1 and two copies of triplex protein 2/TRX2. Additionally, TRX1 is required for efficient transport of TRX2 to the nucleus, which is the site of capsid assembly. Also prevents necroptosis and extrinsic apoptosis by sequestering host ZBP1 into large, insoluble supercomplexes and impairing its ability to interact with RIPK3. The chain is Triplex capsid protein 1 from Varicella-zoster virus (strain Dumas) (HHV-3).